Reading from the N-terminus, the 351-residue chain is Sulfate/thiosulfate import ATP-binding protein CysA (351 aa).

The ABC transporter domain maps to 3–237; the sequence is ITVRNLHKRF…PRSAFVYEFL (235 aa). Residue 35–42 participates in ATP binding; it reads GPSGCGKT.

The protein belongs to the ABC transporter superfamily. Sulfate/tungstate importer (TC 3.A.1.6) family. In terms of assembly, the complex is composed of two ATP-binding proteins (CysA), two transmembrane proteins (CysT and CysW) and a solute-binding protein (CysP).

It localises to the cell inner membrane. The catalysed reaction is sulfate(out) + ATP + H2O = sulfate(in) + ADP + phosphate + H(+). The enzyme catalyses thiosulfate(out) + ATP + H2O = thiosulfate(in) + ADP + phosphate + H(+). In terms of biological role, part of the ABC transporter complex CysAWTP involved in sulfate/thiosulfate import. Responsible for energy coupling to the transport system. The chain is Sulfate/thiosulfate import ATP-binding protein CysA from Burkholderia pseudomallei (strain K96243).